Reading from the N-terminus, the 401-residue chain is Protein zntC (401 aa).

3 helical membrane passes run 33-53 (GGLI…PWFL), 61-81 (LVSV…GAGF), and 114-134 (ITIV…SGGL). Residues 141-247 (NHMDLSQHNH…SHKDEKDSEK (107 aa)) form a disordered region. The span at 167–184 (GDDDDDDVNEDQEEDSTK) shows a compositional bias: acidic residues. Residues 200 to 209 (HNSSNSSSNG) are compositionally biased toward low complexity. Residues 212-225 (HGLKKKKKSKKEHG) are compositionally biased toward basic residues. Over residues 226–247 (HGHNHDHSSNGHSHKDEKDSEK) the composition is skewed to basic and acidic residues. 5 consecutive transmembrane segments (helical) span residues 256-276 (AWVF…GLGS), 285-305 (GLLI…GIAI), 316-336 (CIAL…GMAI), 351-371 (GIIL…ELLP), and 381-401 (KLKL…ALWV).

The protein belongs to the ZIP transporter (TC 2.A.5) family.

Its subcellular location is the membrane. Functionally, may transport divalent cations. May participate, with dstA, in the regulation of the differentiation of stalk cells during development. This is Protein zntC (zntC) from Dictyostelium discoideum (Social amoeba).